Here is a 710-residue protein sequence, read N- to C-terminus: Proline-rich receptor-like protein kinase PERK13 (710 aa).

The disordered stretch occupies residues 1 to 229 (MSDSPTSSPP…SVPPPANSGG (229 aa)). The Extracellular portion of the chain corresponds to 1–235 (MSDSPTSSPP…NSGGGYQGKT (235 aa)). Pro residues-rich tracts occupy residues 7-21 (SSPP…PPPD), 29-130 (APPP…PPPP), 137-151 (PPAP…PPAS), and 168-188 (ATSP…PNAP). Asn-191 carries an N-linked (GlcNAc...) asparagine glycan. Over residues 209-220 (SPSRGVPSSGNS) the composition is skewed to low complexity. Residues 236–256 (MAGFAIAGFAVIALMAVVFLV) form a helical membrane-spanning segment. At 257–710 (RRKKKRNIDA…ENRNFNNRRY (454 aa)) the chain is on the cytoplasmic side. The disordered stretch occupies residues 289–334 (QNPTKGYSGPGGYNSQQQSNSGNSFGSQRGGGGYTRSGSAPDSAVM). Residues 301–315 (YNSQQQSNSGNSFGS) show a composition bias toward low complexity. Residue Thr-342 is modified to Phosphothreonine. Residues 353–619 (FSKHNILGEG…RHSGPKRPRM (267 aa)) form the Protein kinase domain. Residues 359–367 (LGEGGFGCV) and Lys-381 contribute to the ATP site. At Tyr-426 the chain carries Phosphotyrosine. The Proton acceptor role is filled by Asp-477. Residue Ser-510 is modified to Phosphoserine. Phosphothreonine occurs at positions 511 and 516. Tyr-524 is subject to Phosphotyrosine. Residues 676–710 (SGDYSVQDSRKGSNGASSEFTRNETENRNFNNRRY) are disordered.

The protein belongs to the protein kinase superfamily. Ser/Thr protein kinase family. As to quaternary structure, interacts with KIPK1 and KIPK2 (via its cytosolic domain). In terms of tissue distribution, mostly expressed in roots, especially in root hairs.

It localises to the cell membrane. It carries out the reaction L-seryl-[protein] + ATP = O-phospho-L-seryl-[protein] + ADP + H(+). It catalyses the reaction L-threonyl-[protein] + ATP = O-phospho-L-threonyl-[protein] + ADP + H(+). Functionally, negatively regulates root hair elongation. This Arabidopsis thaliana (Mouse-ear cress) protein is Proline-rich receptor-like protein kinase PERK13 (PERK13).